Reading from the N-terminus, the 307-residue chain is Acetyl-coenzyme A carboxylase carboxyl transferase subunit beta (307 aa).

Residues 1–21 (MAMADQRNDKPGRPAAQRERR) form a disordered region. A CoA carboxyltransferase N-terminal domain is found at 43–307 (LWVKCPETGE…MGRERLSPAA (265 aa)).

This sequence belongs to the AccD/PCCB family. In terms of assembly, acetyl-CoA carboxylase is a heterohexamer composed of biotin carboxyl carrier protein (AccB), biotin carboxylase (AccC) and two subunits each of ACCase subunit alpha (AccA) and ACCase subunit beta (AccD).

The protein resides in the cytoplasm. The enzyme catalyses N(6)-carboxybiotinyl-L-lysyl-[protein] + acetyl-CoA = N(6)-biotinyl-L-lysyl-[protein] + malonyl-CoA. The protein operates within lipid metabolism; malonyl-CoA biosynthesis; malonyl-CoA from acetyl-CoA: step 1/1. Component of the acetyl coenzyme A carboxylase (ACC) complex. Biotin carboxylase (BC) catalyzes the carboxylation of biotin on its carrier protein (BCCP) and then the CO(2) group is transferred by the transcarboxylase to acetyl-CoA to form malonyl-CoA. The polypeptide is Acetyl-coenzyme A carboxylase carboxyl transferase subunit beta (Phenylobacterium zucineum (strain HLK1)).